The following is a 144-amino-acid chain: Large ribosomal subunit protein uL15 (144 aa).

The disordered stretch occupies residues 1–49; sequence MKLNTLSPAAGAKSAAKRVGRGIGSGLGKTAGRGHKGQKSRSGGGVRVG. The segment covering 21-31 has biased composition (gly residues); that stretch reads RGIGSGLGKTA.

The protein belongs to the universal ribosomal protein uL15 family. Part of the 50S ribosomal subunit.

In terms of biological role, binds to the 23S rRNA. In Shewanella loihica (strain ATCC BAA-1088 / PV-4), this protein is Large ribosomal subunit protein uL15.